We begin with the raw amino-acid sequence, 565 residues long: NAD-dependent malic enzyme (565 aa).

Y104 functions as the Proton donor in the catalytic mechanism. R157 is a binding site for NAD(+). Residue K175 is the Proton acceptor of the active site. A divalent metal cation is bound by residues E246, D247, and D270. Residues D270 and N418 each coordinate NAD(+).

It belongs to the malic enzymes family. In terms of assembly, homotetramer. Mg(2+) serves as cofactor. The cofactor is Mn(2+).

The enzyme catalyses (S)-malate + NAD(+) = pyruvate + CO2 + NADH. It carries out the reaction oxaloacetate + H(+) = pyruvate + CO2. The polypeptide is NAD-dependent malic enzyme (Salmonella newport (strain SL254)).